The sequence spans 883 residues: Phosphoenolpyruvate carboxylase (883 aa).

Residues H138 and K546 contribute to the active site.

This sequence belongs to the PEPCase type 1 family. Mg(2+) serves as cofactor.

The catalysed reaction is oxaloacetate + phosphate = phosphoenolpyruvate + hydrogencarbonate. Its function is as follows. Forms oxaloacetate, a four-carbon dicarboxylic acid source for the tricarboxylic acid cycle. The chain is Phosphoenolpyruvate carboxylase from Escherichia coli O127:H6 (strain E2348/69 / EPEC).